We begin with the raw amino-acid sequence, 354 residues long: Biotin synthase (354 aa).

In terms of domain architecture, Radical SAM core spans 64–282 (GDVELATLLS…IAVARITMPR (219 aa)). The [4Fe-4S] cluster site is built by C79, C83, and C86. 4 residues coordinate [2Fe-2S] cluster: C123, C154, C214, and R286.

The protein belongs to the radical SAM superfamily. Biotin synthase family. As to quaternary structure, homodimer. [4Fe-4S] cluster is required as a cofactor. Requires [2Fe-2S] cluster as cofactor.

It carries out the reaction (4R,5S)-dethiobiotin + (sulfur carrier)-SH + 2 reduced [2Fe-2S]-[ferredoxin] + 2 S-adenosyl-L-methionine = (sulfur carrier)-H + biotin + 2 5'-deoxyadenosine + 2 L-methionine + 2 oxidized [2Fe-2S]-[ferredoxin]. It participates in cofactor biosynthesis; biotin biosynthesis; biotin from 7,8-diaminononanoate: step 2/2. Functionally, catalyzes the conversion of dethiobiotin (DTB) to biotin by the insertion of a sulfur atom into dethiobiotin via a radical-based mechanism. In Paracidovorax citrulli (strain AAC00-1) (Acidovorax citrulli), this protein is Biotin synthase.